The following is a 184-amino-acid chain: ATP synthase subunit b, chloroplastic (184 aa).

A helical membrane pass occupies residues 31 to 49 (IINPSVVLSVLIYFGKGVL).

It belongs to the ATPase B chain family. F-type ATPases have 2 components, F(1) - the catalytic core - and F(0) - the membrane proton channel. F(1) has five subunits: alpha(3), beta(3), gamma(1), delta(1), epsilon(1). F(0) has four main subunits: a(1), b(1), b'(1) and c(10-14). The alpha and beta chains form an alternating ring which encloses part of the gamma chain. F(1) is attached to F(0) by a central stalk formed by the gamma and epsilon chains, while a peripheral stalk is formed by the delta, b and b' chains.

The protein resides in the plastid. It is found in the chloroplast thylakoid membrane. Its function is as follows. F(1)F(0) ATP synthase produces ATP from ADP in the presence of a proton or sodium gradient. F-type ATPases consist of two structural domains, F(1) containing the extramembraneous catalytic core and F(0) containing the membrane proton channel, linked together by a central stalk and a peripheral stalk. During catalysis, ATP synthesis in the catalytic domain of F(1) is coupled via a rotary mechanism of the central stalk subunits to proton translocation. Functionally, component of the F(0) channel, it forms part of the peripheral stalk, linking F(1) to F(0). This Pinus koraiensis (Korean pine) protein is ATP synthase subunit b, chloroplastic.